The following is a 714-amino-acid chain: Fatty acid oxidation complex subunit alpha (714 aa).

Residues 1-190 (MDMTSAFTLN…KSGLVDEIVP (190 aa)) form an enoyl-CoA hydratase region. Residues 306 to 714 (GTLDSIGILG…FWKTSATDRH (409 aa)) are 3-hydroxyacyl-CoA dehydrogenase.

The protein in the N-terminal section; belongs to the enoyl-CoA hydratase/isomerase family. This sequence in the central section; belongs to the 3-hydroxyacyl-CoA dehydrogenase family. As to quaternary structure, heterotetramer of two alpha chains (FadJ) and two beta chains (FadI).

Its subcellular location is the cytoplasm. It catalyses the reaction a (3S)-3-hydroxyacyl-CoA = a (2E)-enoyl-CoA + H2O. The catalysed reaction is a 4-saturated-(3S)-3-hydroxyacyl-CoA = a (3E)-enoyl-CoA + H2O. It carries out the reaction a (3S)-3-hydroxyacyl-CoA + NAD(+) = a 3-oxoacyl-CoA + NADH + H(+). The enzyme catalyses (3S)-3-hydroxybutanoyl-CoA = (3R)-3-hydroxybutanoyl-CoA. It participates in lipid metabolism; fatty acid beta-oxidation. In terms of biological role, catalyzes the formation of a hydroxyacyl-CoA by addition of water on enoyl-CoA. Also exhibits 3-hydroxyacyl-CoA epimerase and 3-hydroxyacyl-CoA dehydrogenase activities. This is Fatty acid oxidation complex subunit alpha from Escherichia fergusonii (strain ATCC 35469 / DSM 13698 / CCUG 18766 / IAM 14443 / JCM 21226 / LMG 7866 / NBRC 102419 / NCTC 12128 / CDC 0568-73).